The chain runs to 151 residues: uncharacterized protein (151 aa).

This is an uncharacterized protein from Bacillus subtilis (strain 168).